The chain runs to 406 residues: Bifunctional enzyme IspD/IspF (406 aa).

Positions 1 to 246 (MLQMPSKQPI…KLSASLLPDV (246 aa)) are 2-C-methyl-D-erythritol 4-phosphate cytidylyltransferase. Residues 247 to 406 (RTGNGYDVHQ…ATVVYRGVKR (160 aa)) form a 2-C-methyl-D-erythritol 2,4-cyclodiphosphate synthase region. A divalent metal cation is bound by residues aspartate 253 and histidine 255. Residues 253–255 (DVH) and 279–280 (HS) contribute to the 4-CDP-2-C-methyl-D-erythritol 2-phosphate site. Histidine 287 is a binding site for a divalent metal cation. 4-CDP-2-C-methyl-D-erythritol 2-phosphate-binding positions include 301-303 (DIG), 377-380 (TTNE), phenylalanine 384, and arginine 387.

This sequence in the N-terminal section; belongs to the IspD/TarI cytidylyltransferase family. IspD subfamily. In the C-terminal section; belongs to the IspF family. The cofactor is a divalent metal cation.

The catalysed reaction is 2-C-methyl-D-erythritol 4-phosphate + CTP + H(+) = 4-CDP-2-C-methyl-D-erythritol + diphosphate. It catalyses the reaction 4-CDP-2-C-methyl-D-erythritol 2-phosphate = 2-C-methyl-D-erythritol 2,4-cyclic diphosphate + CMP. It participates in isoprenoid biosynthesis; isopentenyl diphosphate biosynthesis via DXP pathway; isopentenyl diphosphate from 1-deoxy-D-xylulose 5-phosphate: step 2/6. It functions in the pathway isoprenoid biosynthesis; isopentenyl diphosphate biosynthesis via DXP pathway; isopentenyl diphosphate from 1-deoxy-D-xylulose 5-phosphate: step 4/6. Its function is as follows. Bifunctional enzyme that catalyzes the formation of 4-diphosphocytidyl-2-C-methyl-D-erythritol from CTP and 2-C-methyl-D-erythritol 4-phosphate (MEP) (IspD), and catalyzes the conversion of 4-diphosphocytidyl-2-C-methyl-D-erythritol 2-phosphate (CDP-ME2P) to 2-C-methyl-D-erythritol 2,4-cyclodiphosphate (ME-CPP) with a corresponding release of cytidine 5-monophosphate (CMP) (IspF). The sequence is that of Bifunctional enzyme IspD/IspF from Rhizobium leguminosarum bv. trifolii (strain WSM2304).